Consider the following 362-residue polypeptide: Peptide chain release factor 1 (362 aa).

N5-methylglutamine is present on Q237. The disordered stretch occupies residues 279 to 305; sequence RLQQAEDEKRRSEEESSRRNLVASGDR. The span at 282–296 shows a compositional bias: basic and acidic residues; that stretch reads QAEDEKRRSEEESSR.

Belongs to the prokaryotic/mitochondrial release factor family. In terms of processing, methylated by PrmC. Methylation increases the termination efficiency of RF1.

It localises to the cytoplasm. Its function is as follows. Peptide chain release factor 1 directs the termination of translation in response to the peptide chain termination codons UAG and UAA. This is Peptide chain release factor 1 from Colwellia psychrerythraea (strain 34H / ATCC BAA-681) (Vibrio psychroerythus).